Here is a 100-residue protein sequence, read N- to C-terminus: ATP synthase subunit c (100 aa).

A run of 2 helical transmembrane segments spans residues 30–50 (LLYLGAGLAIGLAGLGAGVGM) and 80–100 (AFIETIALYGLLIAFILLFVV).

The protein belongs to the ATPase C chain family. F-type ATPases have 2 components, F(1) - the catalytic core - and F(0) - the membrane proton channel. F(1) has five subunits: alpha(3), beta(3), gamma(1), delta(1), epsilon(1). F(0) has three main subunits: a(1), b(2) and c(10-14). The alpha and beta chains form an alternating ring which encloses part of the gamma chain. F(1) is attached to F(0) by a central stalk formed by the gamma and epsilon chains, while a peripheral stalk is formed by the delta and b chains.

The protein resides in the cell inner membrane. Its function is as follows. F(1)F(0) ATP synthase produces ATP from ADP in the presence of a proton or sodium gradient. F-type ATPases consist of two structural domains, F(1) containing the extramembraneous catalytic core and F(0) containing the membrane proton channel, linked together by a central stalk and a peripheral stalk. During catalysis, ATP synthesis in the catalytic domain of F(1) is coupled via a rotary mechanism of the central stalk subunits to proton translocation. Functionally, key component of the F(0) channel; it plays a direct role in translocation across the membrane. A homomeric c-ring of between 10-14 subunits forms the central stalk rotor element with the F(1) delta and epsilon subunits. The protein is ATP synthase subunit c of Aquifex aeolicus (strain VF5).